A 174-amino-acid chain; its full sequence is MADKQIERTLIILKPDAVVRGLMGEIISRFEKRGLKIVGMKMIWIDRKLAEKHYAEHKGKPFFEPLIDYITKAPSVVMVVEGRYAISVVRKMAGATDPKDAEPGSIRGDYGLDVGDAIYNVIHASDSPESAEREINLYFKPEELFEYCKAADWFYHTHARSKKEYLDSMDCLER.

Lys-14, Phe-62, Arg-90, Thr-96, and Arg-107 together coordinate ATP. The active-site Pros-phosphohistidine intermediate is the His-123.

Belongs to the NDK family. Mg(2+) is required as a cofactor.

It is found in the cytoplasm. The enzyme catalyses a 2'-deoxyribonucleoside 5'-diphosphate + ATP = a 2'-deoxyribonucleoside 5'-triphosphate + ADP. It catalyses the reaction a ribonucleoside 5'-diphosphate + ATP = a ribonucleoside 5'-triphosphate + ADP. Functionally, major role in the synthesis of nucleoside triphosphates other than ATP. The ATP gamma phosphate is transferred to the NDP beta phosphate via a ping-pong mechanism, using a phosphorylated active-site intermediate. The polypeptide is Nucleoside diphosphate kinase (Thermococcus kodakarensis (strain ATCC BAA-918 / JCM 12380 / KOD1) (Pyrococcus kodakaraensis (strain KOD1))).